The following is a 195-amino-acid chain: UPF0316 protein Pcar_2434 (195 aa).

The next 3 membrane-spanning stretches (helical) occupy residues 13-33 (LFLLPLLVFFARIIDVSIGTL), 45-65 (WAGVLGFFESLIWVLAISQVM), and 71-91 (VWTYIAFALGFATGNYVGVLI).

Belongs to the UPF0316 family.

It is found in the cell membrane. This is UPF0316 protein Pcar_2434 from Syntrophotalea carbinolica (strain DSM 2380 / NBRC 103641 / GraBd1) (Pelobacter carbinolicus).